The following is a 518-amino-acid chain: T-box transcription factor TBX5 (518 aa).

Positions methionine 1–phenylalanine 46 are disordered. Basic and acidic residues predominate over residues leucine 15–proline 28. The segment covering alanine 34 to alanine 45 has biased composition (low complexity). The segment at residues leucine 58–glycine 238 is a DNA-binding region (T-box). Residues methionine 250 to serine 356 are disordered. Positions threonine 262–serine 301 are enriched in polar residues. The residue at position 339 (lysine 339) is an N6-acetyllysine.

As to quaternary structure, monomer. Homodimer (via the T-box); binds DNA as homodimer. Interacts (via the T-box) with NKX2-5 (via the homeobox); this complex binds DNA. Interacts with GATA4. Interacts with KAT2A and KAT2B. In terms of processing, acetylation at Lys-339 by KAT2A and KAT2B promotes nuclear retention.

The protein resides in the nucleus. It localises to the cytoplasm. DNA-binding protein that regulates the transcription of several genes and is involved in heart development and limb pattern formation. Binds to the core DNA motif of NPPA promoter. The sequence is that of T-box transcription factor TBX5 (TBX5) from Homo sapiens (Human).